A 1137-amino-acid chain; its full sequence is Protein sel-1 homolog 3 (1137 aa).

The tract at residues 1–42 is disordered; the sequence is MQWRGAGLWWPRRRQQQQQQQPPPPAFGPPAAAMVPPSRGVS. Asn206 and Asn387 each carry an N-linked (GlcNAc...) asparagine glycan. Sel1-like repeat units lie at residues 575 to 609, 611 to 647, 694 to 730, 732 to 767, 768 to 800, 801 to 839, and 840 to 877; these read HKAS…GQGS, RLSS…TKTP, AAAQ…LETE, PALI…SKGL, HQAV…EMGN, PDAS…QGGH, and IEGT…EKNG. Ser613 carries the post-translational modification Phosphoserine. Asn942 is a glycosylation site (N-linked (GlcNAc...) asparagine). The stretch at 952-988 is one Sel1-like 8 repeat; sequence SFAYLKMGDLYYYGHQNQSQDLELSVQMYAQAALDGD. A helical membrane pass occupies residues 1067–1087; sequence LIYFLGTFLLSVVIAWMVLYL. Residues 1100 to 1137 are disordered; it reads AWVSADPTSSTPSPAVPPAADASDHDPPMMANGPEPRG. The span at 1102 to 1120 shows a compositional bias: low complexity; sequence VSADPTSSTPSPAVPPAAD.

The protein localises to the membrane. This is Protein sel-1 homolog 3 (Sel1l3) from Mus musculus (Mouse).